The primary structure comprises 344 residues: Sorting nexin-16 (344 aa).

Residues 1-10 (MATPYVPVPM) are compositionally biased toward pro residues. The segment at 1–72 (MATPYVPVPM…SASSMCGSPL (72 aa)) is disordered. Residues 14 to 26 (NSASSFTNNRNQR) are compositionally biased toward polar residues. Residues 27–40 (SSSFGSVSTSSTSS) are compositionally biased toward low complexity. Polar residues predominate over residues 52–68 (LKQTNVQDQMDSASSMC). Residues 105 to 218 (DRPSTPTILG…EFLCLDDPPG (114 aa)) enclose the PX domain. A 1,2-diacyl-sn-glycero-3-phospho-(1D-myo-inositol-3-phosphate) contacts are provided by arginine 144, threonine 146, and arginine 184. Serine 222 is subject to Phosphoserine. Residues 223 to 278 (LEESRAFCETLEETNYHLQRELLEKQKEVESLKKLLGEKQLHIDALETRIRTLSLE) are a coiled coil.

It belongs to the sorting nexin family. Homooligomer. Interacts with EGFR.

It localises to the early endosome membrane. It is found in the late endosome membrane. The protein localises to the cytoplasm. Its subcellular location is the lysosome. In terms of biological role, may be involved in several stages of intracellular trafficking. Plays a role in protein transport from early to late endosomes. Plays a role in protein transport to the lysosome. Promotes degradation of EGFR after EGF signaling. The sequence is that of Sorting nexin-16 (Snx16) from Mus musculus (Mouse).